The following is a 343-amino-acid chain: Protein RecA (343 aa).

64–71 is an ATP binding site; the sequence is GPESSGKT.

The protein belongs to the RecA family.

The protein localises to the cytoplasm. Its function is as follows. Can catalyze the hydrolysis of ATP in the presence of single-stranded DNA, the ATP-dependent uptake of single-stranded DNA by duplex DNA, and the ATP-dependent hybridization of homologous single-stranded DNAs. It interacts with LexA causing its activation and leading to its autocatalytic cleavage. This chain is Protein RecA, found in Bacillus thuringiensis (strain Al Hakam).